Consider the following 248-residue polypeptide: Histone H1, gonadal (248 aa).

Disordered stretches follow at residues 1-46 (PGSP…PPVL) and 115-248 (AVAK…KARK). The span at 9–39 (ASPRKSPRKSPKKSPRKASASPRRKAKRARA) shows a compositional bias: basic residues. One can recognise an H15 domain in the interval 41–115 (THPPVLEMVQ…GASGRFRVGA (75 aa)). Basic residues predominate over residues 118 to 248 (KPKKAKKTSA…KRRSPKKARK (131 aa)).

Belongs to the histone H1/H5 family. As to expression, sperm.

Its subcellular location is the nucleus. The protein resides in the chromosome. In terms of biological role, histones H1 are necessary for the condensation of nucleosome chains into higher-order structures. This is Histone H1, gonadal from Parechinus angulosus (Angulate sea urchin).